The chain runs to 453 residues: tRNA modification GTPase MnmE (453 aa).

(6S)-5-formyl-5,6,7,8-tetrahydrofolate contacts are provided by arginine 22, glutamate 79, and lysine 119. The 162-residue stretch at 215 to 376 (GMKVVIAGRP…LQQHLKSLMG (162 aa)) folds into the TrmE-type G domain. Residue asparagine 225 coordinates K(+). Residues 225 to 230 (NAGKSS), 244 to 250 (TEIAGTT), 269 to 272 (DTAG), and 334 to 337 (NKAD) each bind GTP. Serine 229 contacts Mg(2+). The K(+) site is built by threonine 244, isoleucine 246, and threonine 249. Threonine 250 contacts Mg(2+). Lysine 453 provides a ligand contact to (6S)-5-formyl-5,6,7,8-tetrahydrofolate.

This sequence belongs to the TRAFAC class TrmE-Era-EngA-EngB-Septin-like GTPase superfamily. TrmE GTPase family. In terms of assembly, homodimer. Heterotetramer of two MnmE and two MnmG subunits. The cofactor is K(+).

Its subcellular location is the cytoplasm. Functionally, exhibits a very high intrinsic GTPase hydrolysis rate. Involved in the addition of a carboxymethylaminomethyl (cmnm) group at the wobble position (U34) of certain tRNAs, forming tRNA-cmnm(5)s(2)U34. The sequence is that of tRNA modification GTPase MnmE from Shewanella woodyi (strain ATCC 51908 / MS32).